Consider the following 1862-residue polypeptide: Chitin synthase V (1862 aa).

Residues Met1–His26 form a disordered region. Residues Met1–Glu778 form the Myosin motor domain. Residue Asn63 is glycosylated (N-linked (GlcNAc...) asparagine). Gly104–Ser111 serves as a coordination point for ATP. Asn123, Asn429, Asn483, Asn522, and Asn560 each carry an N-linked (GlcNAc...) asparagine glycan. The segment at Thr592–Lys643 is disordered. The interval Leu658 to Asp682 is actin-binding. 2 consecutive transmembrane segments (helical) span residues Trp884–Gly904 and Met923–Ile943. The Cytochrome b5 heme-binding domain occupies Gln947–Phe1009. N-linked (GlcNAc...) asparagine glycosylation is found at Asn1036, Asn1063, and Asn1192. Residues Phe1202–Leu1222 form a helical membrane-spanning segment. Asn1459 and Asn1565 each carry an N-linked (GlcNAc...) asparagine glycan. 3 helical membrane passes run Phe1590–Val1610, Val1623–Ile1643, and Met1650–Leu1670. Asn1771 carries an N-linked (GlcNAc...) asparagine glycan. Positions Met1804–Ser1859 constitute a DEK-C domain.

The protein in the N-terminal section; belongs to the TRAFAC class myosin-kinesin ATPase superfamily. Myosin family. This sequence in the C-terminal section; belongs to the chitin synthase family. Class V subfamily.

It localises to the cell membrane. It carries out the reaction [(1-&gt;4)-N-acetyl-beta-D-glucosaminyl](n) + UDP-N-acetyl-alpha-D-glucosamine = [(1-&gt;4)-N-acetyl-beta-D-glucosaminyl](n+1) + UDP + H(+). Its function is as follows. Polymerizes chitin, a structural polymer of the cell wall and septum, by transferring the sugar moiety of UDP-GlcNAc to the non-reducing end of the growing chitin polymer. ChsV and chsVb do perform additive, but not redundant, functions in septum formation. Involved in cell wall integrity and resistance to antimicrobial plant defense compounds such as the tomato phytoanticipin alpha-tomatine or H(2)O(2), and plays a crucial role in vascular colonization and pathogenicity. Also plays an important role in nuclear sorting or distribution. This Fusarium oxysporum f. sp. lycopersici (strain 4287 / CBS 123668 / FGSC 9935 / NRRL 34936) (Fusarium vascular wilt of tomato) protein is Chitin synthase V.